A 75-amino-acid polypeptide reads, in one-letter code: Meucin-49 (75 aa).

The signal sequence occupies residues 1 to 22 (MNKKILLVIFIVTMLIVDEVNS).

It belongs to the non-disulfide-bridged peptide (NDBP) superfamily. Long chain multifunctional peptide (group 2) family. Expressed by the venom gland.

Its subcellular location is the secreted. Functionally, insecticidal toxin and antimicrobial peptide with potent activity against both Gram-negative and -positive bacteria, as well as against fungi. Acts by disrupting bacterial membrane integrity. Shows broad-spectrum and highly potent bactericidal activities against the Gram-positive bacteria B.cereus, B.megaterium, B.subtilis, M.luteus, S.aureus, S.epidermidis, S.warneri, S.griseus, S.scabiei, S.mutans, S.salivarius, and S.sanguinis. Also exhibits a wide spectrum of activity against the Gram-negative bacteria A.faecalis, E.coli, P.aeruginosa, P.solanacearum, S.enterica, S.marcescens, and S.maltophilia. Also shows antimicrobial activities against the fungal strains Aspergillus flavus, A.fumigatus, A.nidulans, A.niger, Beauveria bassiana, and Saccharomyces cerevisiae. Its antibiotic activity is potentiated by other antibacterial peptides such as MeuNaTxbeta-4. Also induces cytolysis on mice, lizards and birds erythrocytes. This Mesobuthus eupeus (Lesser Asian scorpion) protein is Meucin-49.